The chain runs to 361 residues: Aminomethyltransferase (361 aa).

The protein belongs to the GcvT family. The glycine cleavage system is composed of four proteins: P, T, L and H.

It carries out the reaction N(6)-[(R)-S(8)-aminomethyldihydrolipoyl]-L-lysyl-[protein] + (6S)-5,6,7,8-tetrahydrofolate = N(6)-[(R)-dihydrolipoyl]-L-lysyl-[protein] + (6R)-5,10-methylene-5,6,7,8-tetrahydrofolate + NH4(+). The glycine cleavage system catalyzes the degradation of glycine. The sequence is that of Aminomethyltransferase from Phocaeicola vulgatus (strain ATCC 8482 / DSM 1447 / JCM 5826 / CCUG 4940 / NBRC 14291 / NCTC 11154) (Bacteroides vulgatus).